We begin with the raw amino-acid sequence, 280 residues long: Succinate dehydrogenase [ubiquinone] iron-sulfur subunit, mitochondrial (280 aa).

Residues 1–28 (MAAVVALSLRRRFPAAALGGARLQACRG) constitute a mitochondrion transit peptide. Residues 40–133 (KKFAIYRWDP…VSKIYPLPHM (94 aa)) form the 2Fe-2S ferredoxin-type domain. Residues lysine 51 and lysine 55 each carry the N6-acetyllysine modification. [2Fe-2S] cluster contacts are provided by cysteine 93, cysteine 98, cysteine 101, and cysteine 113. Residues 146–218 (FYAQYKSIEP…PAVLMQAYRW (73 aa)) are interaction with SDHAF1. The region spanning 176-206 (DREKLDGLYECILCACCSTSCPSYWWNGDKY) is the 4Fe-4S ferredoxin-type domain. Residues cysteine 186, cysteine 189, and cysteine 192 each coordinate [4Fe-4S] cluster. Cysteine 196 contacts [3Fe-4S] cluster. A ubiquinone is bound at residue tryptophan 201. [3Fe-4S] cluster is bound by residues cysteine 243 and cysteine 249. Cysteine 253 contributes to the [4Fe-4S] cluster binding site.

Belongs to the succinate dehydrogenase/fumarate reductase iron-sulfur protein family. Component of complex II composed of four subunits: the flavoprotein (FP) SDHA, iron-sulfur protein (IP) SDHB, and a cytochrome b560 composed of SDHC and SDHD. Interacts with SDHAF1; the interaction is required for iron-sulfur cluster incorporation into SDHB. It depends on [2Fe-2S] cluster as a cofactor. [3Fe-4S] cluster serves as cofactor. The cofactor is [4Fe-4S] cluster.

The protein localises to the mitochondrion inner membrane. The enzyme catalyses a quinone + succinate = fumarate + a quinol. The catalysed reaction is (R)-malate + a quinone = enol-oxaloacetate + a quinol. It catalyses the reaction (S)-malate + a quinone = enol-oxaloacetate + a quinol. The protein operates within carbohydrate metabolism; tricarboxylic acid cycle; fumarate from succinate (eukaryal route): step 1/1. With respect to regulation, enol-oxaloacetate inhibits the succinate dehydrogenase activity. In terms of biological role, iron-sulfur protein (IP) subunit of the succinate dehydrogenase complex (mitochondrial respiratory chain complex II), responsible for transferring electrons from succinate to ubiquinone (coenzyme Q). SDH also oxidizes malate to the non-canonical enol form of oxaloacetate, enol-oxaloacetate. Enol-oxaloacetate, which is a potent inhibitor of the succinate dehydrogenase activity, is further isomerized into keto-oxaloacetate. This is Succinate dehydrogenase [ubiquinone] iron-sulfur subunit, mitochondrial (SDHB) from Bos taurus (Bovine).